A 577-amino-acid polypeptide reads, in one-letter code: Arginine--tRNA ligase (577 aa).

The 'HIGH' region signature appears at 122-132 (PNVAKEMHVGH).

This sequence belongs to the class-I aminoacyl-tRNA synthetase family. As to quaternary structure, monomer.

Its subcellular location is the cytoplasm. It carries out the reaction tRNA(Arg) + L-arginine + ATP = L-arginyl-tRNA(Arg) + AMP + diphosphate. The protein is Arginine--tRNA ligase of Salmonella gallinarum (strain 287/91 / NCTC 13346).